Consider the following 383-residue polypeptide: uncharacterized protein (383 aa).

Belongs to the peptidase M20 family.

This is an uncharacterized protein from Staphylococcus aureus (strain MRSA252).